A 234-amino-acid polypeptide reads, in one-letter code: 3-deoxy-manno-octulosonate cytidylyltransferase (234 aa).

Belongs to the KdsB family.

The protein resides in the cytoplasm. It catalyses the reaction 3-deoxy-alpha-D-manno-oct-2-ulosonate + CTP = CMP-3-deoxy-beta-D-manno-octulosonate + diphosphate. The protein operates within nucleotide-sugar biosynthesis; CMP-3-deoxy-D-manno-octulosonate biosynthesis; CMP-3-deoxy-D-manno-octulosonate from 3-deoxy-D-manno-octulosonate and CTP: step 1/1. It functions in the pathway bacterial outer membrane biogenesis; lipopolysaccharide biosynthesis. In terms of biological role, activates KDO (a required 8-carbon sugar) for incorporation into bacterial lipopolysaccharide in Gram-negative bacteria. This chain is 3-deoxy-manno-octulosonate cytidylyltransferase, found in Aquifex aeolicus (strain VF5).